Consider the following 368-residue polypeptide: uncharacterized protein (368 aa).

Residues 1 to 19 (MHVSMIIFVSIFSIKYIMA) form the signal peptide. N-linked (GlcNAc...) asparagine; by host glycosylation is found at Asn-99, Asn-170, Asn-266, and Asn-295.

This is an uncharacterized protein from Ostreid herpesvirus 1 (isolate France) (OsHV-1).